A 550-amino-acid polypeptide reads, in one-letter code: Transcription factor 7-like 1-D (550 aa).

Residues 1–61 form an interaction with CTNNB1-A region; that stretch reads MPQLNSGXGD…SENHSSDSDS (61 aa). Disordered stretches follow at residues 1–77, 182–212, 390–473, and 488–514; these read MPQL…EKPR, GTPP…PYYP, WSAR…SLTT, and ASKS…SRPI. Basic and acidic residues-rich tracts occupy residues 17–32 and 52–77; these read ELIR…EKSP and SENH…EKPR. Residues 109-311 form an interaction with AES and TLE4-A region; sequence LGGITCPMVP…SPNLSMKSNV (203 aa). The HMG box DNA-binding region spans 323–391; that stretch reads IKKPLNAFML…LHSQLYPSWS (69 aa). Residues 406 to 415 are compositionally biased toward basic and acidic residues; it reads KQSPEMENYT. The segment at 407–550 is interaction with CTBP-B; the sequence is QSPEMENYTK…PLPLVARSSD (144 aa). A compositionally biased stretch (low complexity) spans 444–455; sequence SPATPSAALASP.

The protein belongs to the TCF/LEF family. As to quaternary structure, interacts with csnk1e, ctnnb1-A, ctbp-B, dact1-A and gsk3b. May interact with ase and tle4-A. In terms of processing, phosphorylated. Phosphorylation by csnk1e promotes binding to ctnnb1-A while phosphorylation by gsk3b may reverse this effect.

The protein localises to the nucleus. In terms of biological role, participates in the Wnt signaling pathway. Binds to DNA and acts as a repressor in the absence of ctnnb1-A and possibly ctnnb1-B, and as an activator in the presence of these proteins. Required early in development for the establishment of the dorsal body axis in response to maternal Wnt signaling. The sequence is that of Transcription factor 7-like 1-D (tcf7l1-d) from Xenopus laevis (African clawed frog).